A 101-amino-acid polypeptide reads, in one-letter code: Small ribosomal subunit protein uS14 (101 aa).

The protein belongs to the universal ribosomal protein uS14 family. In terms of assembly, part of the 30S ribosomal subunit. Contacts proteins S3 and S10.

Functionally, binds 16S rRNA, required for the assembly of 30S particles and may also be responsible for determining the conformation of the 16S rRNA at the A site. The chain is Small ribosomal subunit protein uS14 from Ehrlichia ruminantium (strain Welgevonden).